The chain runs to 154 residues: Nuclear cap-binding protein subunit 2 (154 aa).

Residues tyrosine 10, tyrosine 33, 102-106 (RVDWD), 113-117 (RQYGR), and 123-124 (QV) each bind mRNA. The 79-residue stretch at 30-108 (CTLYVGNLSF…RLIRVDWDAG (79 aa)) folds into the RRM domain.

The protein belongs to the RRM NCBP2 family. In terms of assembly, component of the nuclear cap-binding complex (CBC), a heterodimer composed of Cbp80 and Cbp20 that interacts with m7GpppG-capped RNA. Interacts with Ars2.

The protein resides in the nucleus. Its function is as follows. Component of the cap-binding complex (CBC), which binds co-transcriptionally to the 5' cap of pre-mRNAs and is involved in various processes such as pre-mRNA splicing and RNA-mediated gene silencing (RNAi). The CBC complex is involved in miRNA-mediated RNA interference via its interaction with Ars2 and is required for primary microRNAs (miRNAs) processing. Also involved in innate immunity via the short interfering RNAs (siRNAs) processing machinery by restricting the viral RNA production. In the CBC complex, Cbp20 recognizes and binds capped RNAs (m7GpppG-capped RNA) but requires Cbp80 to stabilize the movement of its N-terminal loop and lock the CBC into a high affinity cap-binding state with the cap structure. This Drosophila persimilis (Fruit fly) protein is Nuclear cap-binding protein subunit 2 (Cbp20).